A 126-amino-acid polypeptide reads, in one-letter code: Copper resistance protein C (126 aa).

The N-terminal stretch at 1 to 23 (MSILNKAILTGGLVMGVAFSAMA) is a signal peptide. Residue histidine 24 coordinates Cu(2+). Methionine 63, methionine 66, methionine 69, histidine 72, and methionine 75 together coordinate Cu(+). Cu(2+) is bound at residue histidine 115.

The protein belongs to the CopC family. In terms of assembly, monomer-dimer equilibrium in solution for the apo protein. Dimerization is significantly enhanced upon binding of copper(I).

It is found in the periplasm. In terms of biological role, copper-binding protein involved in copper resistance. This Escherichia coli protein is Copper resistance protein C.